Here is a 147-residue protein sequence, read N- to C-terminus: Large ribosomal subunit protein uL15 (147 aa).

Residues 1–46 (MSIRLENLSYTPGARKEKHRKGRGHAAGKGKQAGRGQSGQKKRSTV) form a disordered region. The span at 16–28 (KEKHRKGRGHAAG) shows a compositional bias: basic residues.

The protein belongs to the universal ribosomal protein uL15 family. In terms of assembly, part of the 50S ribosomal subunit.

Functionally, binds to the 23S rRNA. The chain is Large ribosomal subunit protein uL15 from Mesomycoplasma hyopneumoniae (strain 7448) (Mycoplasma hyopneumoniae).